Consider the following 101-residue polypeptide: MRKFETLLLLSPELGSQPREDLLAVLTGVIEREQGSVLAVDHWGMRDLAYPVRKHMRGYYVRLEYAVAGPSVAELERIIRITDGIYKFVTVKLADEAEEAA.

It belongs to the bacterial ribosomal protein bS6 family.

Binds together with bS18 to 16S ribosomal RNA. This Oleidesulfovibrio alaskensis (strain ATCC BAA-1058 / DSM 17464 / G20) (Desulfovibrio alaskensis) protein is Small ribosomal subunit protein bS6.